The sequence spans 430 residues: Glutamine synthetase, chloroplastic/mitochondrial (430 aa).

The transit peptide at 1–45 (MAQILAASPTCQMRVPKHSSVIASSSKLWSSVVLKQKKQSNNKVR) directs the protein to the chloroplast and mitochondrion. The GS beta-grasp domain maps to 77–157 (IIAEYIWIGG…VICDTWTPAG (81 aa)). The disordered stretch occupies residues 97 to 122 (TIEKPVEDPSELPKWNYDGSSTGQAP). Serine 106 bears the Phosphoserine mark. One can recognise a GS catalytic domain in the interval 161-430 (PTNKRAKAAE…LAAQKLSLNV (270 aa)).

It belongs to the glutamine synthetase family. In terms of assembly, homooctamer. Expressed in mesophyll and epidermal cells of leaves.

The protein resides in the plastid. The protein localises to the chloroplast. It localises to the mitochondrion. It catalyses the reaction L-glutamate + NH4(+) + ATP = L-glutamine + ADP + phosphate + H(+). Functionally, the light-modulated chloroplast/mitochondrial enzyme, encoded by a nuclear gene and expressed primarily in leaves, is responsible for the reassimilation of the ammonia generated by photorespiration. This chain is Glutamine synthetase, chloroplastic/mitochondrial (GLN2), found in Arabidopsis thaliana (Mouse-ear cress).